Here is a 610-residue protein sequence, read N- to C-terminus: UvrABC system protein C (610 aa).

One can recognise a GIY-YIG domain in the interval 13 to 92 (TLPGVYLMKN…IKQHKPRYNA (80 aa)). The UVR domain maps to 204 to 239 (KDVLKDLYEEMRLLSEQLEFEKANHLLRTIRYIEKT).

The protein belongs to the UvrC family. As to quaternary structure, interacts with UvrB in an incision complex.

It localises to the cytoplasm. Its function is as follows. The UvrABC repair system catalyzes the recognition and processing of DNA lesions. UvrC both incises the 5' and 3' sides of the lesion. The N-terminal half is responsible for the 3' incision and the C-terminal half is responsible for the 5' incision. The sequence is that of UvrABC system protein C from Protochlamydia amoebophila (strain UWE25).